The chain runs to 500 residues: Protein nucleotidyltransferase YdiU (500 aa).

ATP is bound by residues G98, G100, R101, K124, D136, G137, R187, and R194. Catalysis depends on D263, which acts as the Proton acceptor. Residues N264 and D273 each coordinate Mg(2+). Position 273 (D273) interacts with ATP.

The protein belongs to the SELO family. Mg(2+) is required as a cofactor. It depends on Mn(2+) as a cofactor.

The catalysed reaction is L-seryl-[protein] + ATP = 3-O-(5'-adenylyl)-L-seryl-[protein] + diphosphate. The enzyme catalyses L-threonyl-[protein] + ATP = 3-O-(5'-adenylyl)-L-threonyl-[protein] + diphosphate. It carries out the reaction L-tyrosyl-[protein] + ATP = O-(5'-adenylyl)-L-tyrosyl-[protein] + diphosphate. It catalyses the reaction L-histidyl-[protein] + UTP = N(tele)-(5'-uridylyl)-L-histidyl-[protein] + diphosphate. The catalysed reaction is L-seryl-[protein] + UTP = O-(5'-uridylyl)-L-seryl-[protein] + diphosphate. The enzyme catalyses L-tyrosyl-[protein] + UTP = O-(5'-uridylyl)-L-tyrosyl-[protein] + diphosphate. Nucleotidyltransferase involved in the post-translational modification of proteins. It can catalyze the addition of adenosine monophosphate (AMP) or uridine monophosphate (UMP) to a protein, resulting in modifications known as AMPylation and UMPylation. This is Protein nucleotidyltransferase YdiU from Herminiimonas arsenicoxydans.